Consider the following 336-residue polypeptide: Fructose-1,6-bisphosphatase class 1 (336 aa).

E91, D114, L116, and D117 together coordinate Mg(2+). Substrate-binding positions include 117–120 (DGSS), N210, Y243, and K273. E279 lines the Mg(2+) pocket.

This sequence belongs to the FBPase class 1 family. As to quaternary structure, homotetramer. The cofactor is Mg(2+).

The protein localises to the cytoplasm. It catalyses the reaction beta-D-fructose 1,6-bisphosphate + H2O = beta-D-fructose 6-phosphate + phosphate. The protein operates within carbohydrate biosynthesis; gluconeogenesis. The polypeptide is Fructose-1,6-bisphosphatase class 1 (Dichelobacter nodosus (strain VCS1703A)).